The primary structure comprises 316 residues: Protein prune homolog 2 (316 aa).

The tract at residues 1–24 (MDIPLDAAEIRPEPPNSLDLNGSS) is disordered. A CRAL-TRIO domain is found at 128–285 (IEPYKKVISH…TIVKLDEELR (158 aa)). Residues 287-316 (SESPKAGCLPNEPEMNTLEEEFENKMGDND) form a disordered region.

The protein localises to the cytoplasm. The protein is Protein prune homolog 2 (Prune2) of Xenopus tropicalis (Western clawed frog).